A 391-amino-acid polypeptide reads, in one-letter code: E3 ubiquitin-protein ligase RMND5A (391 aa).

The LisH domain maps to 114–146 (SQQILSEVMVEHFFRQGMLDVAEELCQEAGLSI). Positions 153–210 (PFVELNRILEALKVRVLRPALEWAVSNREMLMAQNSSLEFKLHRLYFISLLMGGTVNQ) constitute a CTLH domain. The RING-Gid-type zinc-finger motif lies at 336–377 (CPILRQQTTDNNPPMKLVCGHIISRDALNKMFNGSKLKCPYC).

In terms of assembly, identified in the CTLH complex that contains at least RANBP9, MKLN1, MAEA, RMND5A, GID8 and ARMC8.

The protein localises to the nucleus. The protein resides in the nucleoplasm. It is found in the cytoplasm. It catalyses the reaction S-ubiquitinyl-[E2 ubiquitin-conjugating enzyme]-L-cysteine + [acceptor protein]-L-lysine = [E2 ubiquitin-conjugating enzyme]-L-cysteine + N(6)-ubiquitinyl-[acceptor protein]-L-lysine.. E3 ubiquitin-protein ligase component of the CTLH complex. This chain is E3 ubiquitin-protein ligase RMND5A (rmnd5a), found in Xenopus tropicalis (Western clawed frog).